The sequence spans 423 residues: Serine--tRNA ligase (423 aa).

Residue 230-232 coordinates L-serine; the sequence is TAE. ATP is bound at residue 261-263; the sequence is RSE. Glutamate 284 contributes to the L-serine binding site. 348–351 is an ATP binding site; that stretch reads EISS. L-serine is bound at residue serine 384.

Belongs to the class-II aminoacyl-tRNA synthetase family. Type-1 seryl-tRNA synthetase subfamily. As to quaternary structure, homodimer. The tRNA molecule binds across the dimer.

It localises to the cytoplasm. It carries out the reaction tRNA(Ser) + L-serine + ATP = L-seryl-tRNA(Ser) + AMP + diphosphate + H(+). The catalysed reaction is tRNA(Sec) + L-serine + ATP = L-seryl-tRNA(Sec) + AMP + diphosphate + H(+). The protein operates within aminoacyl-tRNA biosynthesis; selenocysteinyl-tRNA(Sec) biosynthesis; L-seryl-tRNA(Sec) from L-serine and tRNA(Sec): step 1/1. Its function is as follows. Catalyzes the attachment of serine to tRNA(Ser). Is also able to aminoacylate tRNA(Sec) with serine, to form the misacylated tRNA L-seryl-tRNA(Sec), which will be further converted into selenocysteinyl-tRNA(Sec). In Syntrophobacter fumaroxidans (strain DSM 10017 / MPOB), this protein is Serine--tRNA ligase.